We begin with the raw amino-acid sequence, 536 residues long: Suppressor of cytokine signaling 5 (536 aa).

Residues methionine 1–serine 50 are required for interaction with IL4R. The interval serine 115 to arginine 175 is disordered. Low complexity predominate over residues valine 158–serine 169. The region spanning cysteine 381–leucine 476 is the SH2 domain. In terms of domain architecture, SOCS box spans leucine 471 to lysine 520.

As to quaternary structure, interacts with IL4R; inhibits IL4 signaling. Interacts with EGFR. Interacts with ELOB and ELOC; mediates EGFR ubiquitination and degradation. Post-translationally, phosphorylated. Phosphorylation is induced by EGF.

Its pathway is protein modification; protein ubiquitination. Functionally, SOCS family proteins form part of a classical negative feedback system that regulates cytokine signal transduction. May be a substrate-recognition component of a SCF-like ECS (Elongin BC-CUL2/5-SOCS-box protein) E3 ubiquitin-protein ligase complex which mediates the ubiquitination and subsequent proteasomal degradation of target proteins. Inhibits for instance EGF signaling by mediating the degradation of the EGF receptor/EGFR. Involved in the regulation of T-helper cell differentiation by inhibiting of the IL4 signaling pathway which promotes differentiation into the Th2 phenotype. Can also partially inhibit IL6 and LIF signaling. The protein is Suppressor of cytokine signaling 5 (SOCS5) of Homo sapiens (Human).